Here is a 180-residue protein sequence, read N- to C-terminus: Probable chorismate pyruvate-lyase (180 aa).

Substrate-binding residues include Arg-82, Leu-120, and Glu-165.

Belongs to the UbiC family.

The protein resides in the cytoplasm. It catalyses the reaction chorismate = 4-hydroxybenzoate + pyruvate. It functions in the pathway cofactor biosynthesis; ubiquinone biosynthesis. In terms of biological role, removes the pyruvyl group from chorismate, with concomitant aromatization of the ring, to provide 4-hydroxybenzoate (4HB) for the ubiquinone pathway. The protein is Probable chorismate pyruvate-lyase of Photobacterium profundum (strain SS9).